A 225-amino-acid chain; its full sequence is Prolactin (225 aa).

The N-terminal stretch at 1–28 (MTIQGSDRKGTLLLLVMSNLLFCQNVHP) is a signal peptide. Cys-32 and Cys-37 are disulfide-bonded. 2 positions are modified to phosphoserine: Ser-52 and Ser-116. 2 disulfides stabilise this stretch: Cys-84–Cys-200 and Cys-217–Cys-225.

The protein belongs to the somatotropin/prolactin family. Interacts with PRLR.

It is found in the secreted. Prolactin acts primarily on the mammary gland by promoting lactation. The sequence is that of Prolactin (PRL) from Alexandromys montebelli (Japanese grass vole).